Reading from the N-terminus, the 407-residue chain is Nuclear hormone receptor family member nhr-86 (407 aa).

Positions 21-96 (KSTCSICRED…VGMNPAGVQQ (76 aa)) form a DNA-binding region, nuclear receptor. 2 consecutive NR C4-type zinc fingers follow at residues 24–44 (CSICREDGDGYHFGAEACRAC) and 60–79 (CRGNNDCEITANIRCMCRSC). Residues 130-405 (AQSALVEDLH…KDFYDLVNGK (276 aa)) form the NR LBD domain. The tract at residues 394-405 (PPKDFYDLVNGK) is AF-2.

The protein belongs to the nuclear hormone receptor family. Expressed in intestinal epithelial cells, excretory gland cells and in several head neurons.

Its subcellular location is the nucleus. Its function is as follows. Nuclear receptor which acts as a transcription activator. Binds small molecule ligands, such as phenazine 1-carboxamide (PCN), a pathogen-derived metabolite, leading to modulation of innate immune responses against virulent pathogens. On exposure to exogenous PCN, P.aeruginosa and other xenobiotic immunostimulant such as R24, activates immune response genes, including irg-4, irg-5, mul-1, drd-50, cyp-35C1 and ugt-30, probably via direct interaction with their promoters, and independent of the p38 MAPK pmk-1 pathway. Exhibits higher affinity to R24 than PCN and thus induces stronger immune response. Binds its own promoter thereby autoregulating its expression in the head hypodermis and the pharynx. Possibly plays a role in lipid storage or catabolism. The sequence is that of Nuclear hormone receptor family member nhr-86 (nhr-86) from Caenorhabditis elegans.